A 533-amino-acid polypeptide reads, in one-letter code: 1-aminocyclopropane-1-carboxylate synthase 5 (533 aa).

N6-(pyridoxal phosphate)lysine is present on Lys-358.

The protein belongs to the class-I pyridoxal-phosphate-dependent aminotransferase family. Requires pyridoxal 5'-phosphate as cofactor. In terms of tissue distribution, expressed in shoots and leaf blades. Expressed at low levels in leaf sheaths. Expressed in vasculature of roots and shoots.

The catalysed reaction is S-adenosyl-L-methionine = 1-aminocyclopropane-1-carboxylate + S-methyl-5'-thioadenosine + H(+). The protein operates within alkene biosynthesis; ethylene biosynthesis via S-adenosyl-L-methionine; ethylene from S-adenosyl-L-methionine: step 1/2. Its function is as follows. Catalyzes the formation of 1-aminocyclopropane-1-carboxylate, a direct precursor of ethylene in higher plants. The polypeptide is 1-aminocyclopropane-1-carboxylate synthase 5 (Oryza sativa subsp. japonica (Rice)).